Reading from the N-terminus, the 70-residue chain is Small, acid-soluble spore protein 1 (70 aa).

The protein belongs to the alpha/beta-type SASP family.

Its function is as follows. SASP are bound to spore DNA. They are double-stranded DNA-binding proteins that cause DNA to change to an a-like conformation. They protect the DNA backbone from chemical and enzymatic cleavage and are thus involved in dormant spore's high resistance to UV light. The chain is Small, acid-soluble spore protein 1 (sasP-1) from Geobacillus stearothermophilus (Bacillus stearothermophilus).